The primary structure comprises 96 residues: UPF0235 protein NT01EI_0281 (96 aa).

It belongs to the UPF0235 family.

The protein is UPF0235 protein NT01EI_0281 of Edwardsiella ictaluri (strain 93-146).